Reading from the N-terminus, the 244-residue chain is Krueppel-like factor 9 (244 aa).

Disordered stretches follow at residues 24-51 and 79-143; these read VPEH…GDPG and PSVC…EKRH. Basic and acidic residues predominate over residues 32–51; that stretch reads DAERLRLPEREVTKEHGDPG. Serine 122 bears the Phosphoserine mark. Residues 134–143 are compositionally biased toward basic residues; sequence KGKHASEKRH. 3 consecutive C2H2-type zinc fingers follow at residues 143–167, 173–197, and 203–225; these read HKCP…YRVH, FPCT…YRTH, and FRCP…ARRH.

This sequence belongs to the Sp1 C2H2-type zinc-finger protein family. As to quaternary structure, interacts with ZZEF1.

It is found in the nucleus. Functionally, transcription factor that binds to GC box promoter elements. Selectively activates mRNA synthesis from genes containing tandem repeats of GC boxes but represses genes with a single GC box. Acts as an epidermal circadian transcription factor regulating keratinocyte proliferation. This is Krueppel-like factor 9 (Klf9) from Rattus norvegicus (Rat).